The primary structure comprises 669 residues: DNA helicase/primase complex-associated protein (669 aa).

The segment at 502-526 is disordered; it reads RSTAGTGGEPNPRHITGPDTEGNGE.

The protein belongs to the herpesviridae HEPA family. In terms of assembly, associates with the primase and the helicase to form the helicase-primase complex. Interacts with the origin-binding protein. Interacts with the polymerase catalytic subunit.

Its subcellular location is the host nucleus. Functionally, component of the helicase/primase complex. Unwinds the DNA at the replication forks and generates single-stranded DNA for both leading and lagging strand synthesis. The primase synthesizes short RNA primers on the lagging strand that the polymerase presumably elongates using dNTPs. The primase-associated factor has no known catalytic activity in the complex and may serve to facilitate the formation of the replisome by directly interacting with the origin-binding protein and the polymerase. In Human herpesvirus 8 type P (isolate GK18) (HHV-8), this protein is DNA helicase/primase complex-associated protein (ORF40).